The chain runs to 465 residues: Ribulose bisphosphate carboxylase large chain (465 aa).

At K4 the chain carries N6,N6,N6-trimethyllysine. Residues N113 and T163 each coordinate substrate. K165 (proton acceptor) is an active-site residue. K167 serves as a coordination point for substrate. Residues K191, D193, and E194 each coordinate Mg(2+). At K191 the chain carries N6-carboxylysine. H284 serves as the catalytic Proton acceptor. Residues R285, H317, and S369 each coordinate substrate.

The protein belongs to the RuBisCO large chain family. Type I subfamily. Heterohexadecamer of 8 large chains and 8 small chains; disulfide-linked. The disulfide link is formed within the large subunit homodimers. The cofactor is Mg(2+). Post-translationally, the disulfide bond which can form in the large chain dimeric partners within the hexadecamer appears to be associated with oxidative stress and protein turnover.

It is found in the plastid. The protein localises to the chloroplast. It catalyses the reaction 2 (2R)-3-phosphoglycerate + 2 H(+) = D-ribulose 1,5-bisphosphate + CO2 + H2O. The enzyme catalyses D-ribulose 1,5-bisphosphate + O2 = 2-phosphoglycolate + (2R)-3-phosphoglycerate + 2 H(+). In terms of biological role, ruBisCO catalyzes two reactions: the carboxylation of D-ribulose 1,5-bisphosphate, the primary event in carbon dioxide fixation, as well as the oxidative fragmentation of the pentose substrate in the photorespiration process. Both reactions occur simultaneously and in competition at the same active site. This Ephedra tweediana (Vining horsetail) protein is Ribulose bisphosphate carboxylase large chain.